The following is a 147-amino-acid chain: Thyrotropin subunit beta (147 aa).

An N-terminal signal peptide occupies residues 1–20 (MRVVLLASAVLCLLAGQVLS). 6 cysteine pairs are disulfide-bonded: Cys-22/Cys-72, Cys-36/Cys-87, Cys-39/Cys-126, Cys-47/Cys-103, Cys-51/Cys-105, and Cys-108/Cys-115. The N-linked (GlcNAc...) asparagine glycan is linked to Asn-43.

The protein belongs to the glycoprotein hormones subunit beta family. Heterodimer of a common alpha chain and a unique beta chain which confers biological specificity to thyrotropin, lutropin, follitropin and gonadotropin.

It localises to the secreted. Indispensable for the control of thyroid structure and metabolism. May play some role in the biological processes of the immature fishes. The polypeptide is Thyrotropin subunit beta (tshb) (Anguilla anguilla (European freshwater eel)).